The chain runs to 121 residues: Small ribosomal subunit protein uS13 (121 aa).

The disordered stretch occupies residues 94–121 (GLPVRGQNTKNNARTRKGPRRTVANKKK). A compositionally biased stretch (basic residues) spans 106–121 (ARTRKGPRRTVANKKK).

Belongs to the universal ribosomal protein uS13 family. As to quaternary structure, part of the 30S ribosomal subunit. Forms a loose heterodimer with protein S19. Forms two bridges to the 50S subunit in the 70S ribosome.

Its function is as follows. Located at the top of the head of the 30S subunit, it contacts several helices of the 16S rRNA. In the 70S ribosome it contacts the 23S rRNA (bridge B1a) and protein L5 of the 50S subunit (bridge B1b), connecting the 2 subunits; these bridges are implicated in subunit movement. Contacts the tRNAs in the A and P-sites. The chain is Small ribosomal subunit protein uS13 from Anoxybacillus flavithermus (strain DSM 21510 / WK1).